Reading from the N-terminus, the 613-residue chain is Tetratricopeptide repeat protein 39A (613 aa).

3 TPR repeats span residues 315–348 (AIFLFFAGRIEVIKGNIDAAIRRFEECCEAQQHW), 505–538 (CLVKLLKGLCLKYLGRVQEAEENFRSISANEKKI), and 546–579 (PNALLELALLLMEQDRNEEAIKLLESAKQNYKNY).

It belongs to the TTC39 family.

In Homo sapiens (Human), this protein is Tetratricopeptide repeat protein 39A (TTC39A).